Reading from the N-terminus, the 57-residue chain is Temporin-ALk (57 aa).

The first 22 residues, 1-22 (MFTLKKSLLLLFFLGTINLSLC), serve as a signal peptide directing secretion. Residues 23–46 (EQERNAEEERRDDLGERQAEVEKR) constitute a propeptide that is removed on maturation. A Serine amide modification is found at S56.

Belongs to the frog skin active peptide (FSAP) family. Temporin subfamily. As to expression, expressed by the skin glands.

The protein localises to the secreted. In terms of biological role, antimicrobial peptide with weak activity against Gram-positive and Gram-negative bacteria and against fungi. Has been tested against S.aureus (MIC=15.0 ug/mL), B.pumilus (no activity detected), B.cereus (no activity detected), E.coli (MIC=30.0 ug/mL), B.dysenteriae (MIC=60.0 ug/mL), A.cacoaceticus (MIC=75.0 ug/mL), P.aeruginosa (MIC=25.0 ug/mL) and C.albicans (MIC=15.0 ug/mL). Also shows a weak hemolytic activity. In Amolops loloensis (Lolokou Sucker Frog), this protein is Temporin-ALk.